Here is a 613-residue protein sequence, read N- to C-terminus: Tetratricopeptide repeat protein 39A (613 aa).

3 TPR repeats span residues 315-348 (AIFL…QQHW), 505-538 (CLVK…EKKI), and 546-579 (PNAL…YKNY).

This sequence belongs to the TTC39 family.

The sequence is that of Tetratricopeptide repeat protein 39A (TTC39A) from Homo sapiens (Human).